We begin with the raw amino-acid sequence, 111 residues long: Secreted RxLR effector protein 81 (111 aa).

Positions 1 to 16 are cleaved as a signal peptide; the sequence is MLVSMLLIIFPNGVSL. Asn52 carries an N-linked (GlcNAc...) asparagine glycan. The segment at 73–92 is disordered; that stretch reads KKFSSSDEDKSRDVRRRLRP. Residues 88–91 carry the RxLR-dEER motif; sequence RRLR.

This sequence belongs to the RxLR effector family.

The protein resides in the secreted. It localises to the host nucleus. The protein localises to the host cytoplasm. Its function is as follows. Secreted effector that partially suppresses the host cell death induced by cell death-inducing proteins. The polypeptide is Secreted RxLR effector protein 81 (Plasmopara viticola (Downy mildew of grapevine)).